Here is a 367-residue protein sequence, read N- to C-terminus: Phosphoribosylaminoimidazole-succinocarboxamide synthase (367 aa).

It belongs to the SAICAR synthetase family.

The catalysed reaction is 5-amino-1-(5-phospho-D-ribosyl)imidazole-4-carboxylate + L-aspartate + ATP = (2S)-2-[5-amino-1-(5-phospho-beta-D-ribosyl)imidazole-4-carboxamido]succinate + ADP + phosphate + 2 H(+). It functions in the pathway purine metabolism; IMP biosynthesis via de novo pathway; 5-amino-1-(5-phospho-D-ribosyl)imidazole-4-carboxamide from 5-amino-1-(5-phospho-D-ribosyl)imidazole-4-carboxylate: step 1/2. The sequence is that of Phosphoribosylaminoimidazole-succinocarboxamide synthase from Shewanella sp. (strain MR-4).